Reading from the N-terminus, the 952-residue chain is Serine/threonine-protein kinase atg1 (952 aa).

Residues F23–V329 enclose the Protein kinase domain. ATP is bound by residues I29–V37 and K52. D166 serves as the catalytic Proton acceptor. 4 disordered regions span residues E331–Q478, G510–S573, R783–S806, and A920–K952. 2 stretches are compositionally biased toward basic and acidic residues: residues G338–P347 and S356–T372. Positions S386–F398 are enriched in polar residues. Positions P429 to E439 are enriched in basic and acidic residues. 3 stretches are compositionally biased toward polar residues: residues A459–E475, P553–S573, and N793–S806. Residues S933–K952 are compositionally biased toward low complexity.

Belongs to the protein kinase superfamily. Ser/Thr protein kinase family. APG1/unc-51/ULK1 subfamily. Homodimer. Forms a ternary complex with ATG13 and ATG17.

Its subcellular location is the cytoplasm. The protein resides in the preautophagosomal structure membrane. The enzyme catalyses L-seryl-[protein] + ATP = O-phospho-L-seryl-[protein] + ADP + H(+). The catalysed reaction is L-threonyl-[protein] + ATP = O-phospho-L-threonyl-[protein] + ADP + H(+). Functionally, serine/threonine protein kinase involved in the cytoplasm to vacuole transport (Cvt) and found to be essential in autophagy, where it is required for the formation of autophagosomes. Involved in the clearance of protein aggregates which cannot be efficiently cleared by the proteasome. Required for selective autophagic degradation of the nucleus (nucleophagy) as well as for mitophagy which contributes to regulate mitochondrial quantity and quality by eliminating the mitochondria to a basal level to fulfill cellular energy requirements and preventing excess ROS production. Also involved in endoplasmic reticulum-specific autophagic process, in selective removal of ER-associated degradation (ERAD) substrates. Plays a key role in ATG9 and ATG23 cycling through the pre-autophagosomal structure and is necessary to promote ATG18 binding to ATG9 through phosphorylation of ATG9. Catalyzes phosphorylation of ATG4, decreasing the interaction between ATG4 and ATG8 and impairing deconjugation of PE-conjugated forms of ATG8. The polypeptide is Serine/threonine-protein kinase atg1 (Botryotinia fuckeliana (strain B05.10) (Noble rot fungus)).